The following is a 631-amino-acid chain: Probable potassium transport system protein Kup 1 (631 aa).

The next 12 membrane-spanning stretches (helical) occupy residues 16–36, 58–78, 109–129, 145–165, 173–193, 219–239, 255–275, 288–308, 345–365, 370–390, 402–422, and 427–447; these read LGLS…SPLY, VLSL…LVFV, VLVF…TLTP, PLFH…LFLI, VGAL…LLGI, GWSG…GEAL, WFCC…ALLL, LAPP…TIIA, IYIP…VAGF, GLAA…ALLV, PLAV…FFGA, and VGAG…VMIT.

It belongs to the HAK/KUP transporter (TC 2.A.72) family.

Its subcellular location is the cell inner membrane. It carries out the reaction K(+)(in) + H(+)(in) = K(+)(out) + H(+)(out). In terms of biological role, transport of potassium into the cell. Likely operates as a K(+):H(+) symporter. This Geobacter sulfurreducens (strain ATCC 51573 / DSM 12127 / PCA) protein is Probable potassium transport system protein Kup 1.